The primary structure comprises 65 residues: Large ribosomal subunit protein bL31 (65 aa).

Residues Cys-16, Cys-18, Cys-36, and Cys-39 each coordinate Zn(2+).

Belongs to the bacterial ribosomal protein bL31 family. Type A subfamily. Part of the 50S ribosomal subunit. Requires Zn(2+) as cofactor.

Functionally, binds the 23S rRNA. This is Large ribosomal subunit protein bL31 from Campylobacter jejuni subsp. doylei (strain ATCC BAA-1458 / RM4099 / 269.97).